Reading from the N-terminus, the 367-residue chain is Phosphoribosylaminoimidazole-succinocarboxamide synthase (367 aa).

Belongs to the SAICAR synthetase family.

The enzyme catalyses 5-amino-1-(5-phospho-D-ribosyl)imidazole-4-carboxylate + L-aspartate + ATP = (2S)-2-[5-amino-1-(5-phospho-beta-D-ribosyl)imidazole-4-carboxamido]succinate + ADP + phosphate + 2 H(+). Its pathway is purine metabolism; IMP biosynthesis via de novo pathway; 5-amino-1-(5-phospho-D-ribosyl)imidazole-4-carboxamide from 5-amino-1-(5-phospho-D-ribosyl)imidazole-4-carboxylate: step 1/2. The protein is Phosphoribosylaminoimidazole-succinocarboxamide synthase of Saccharophagus degradans (strain 2-40 / ATCC 43961 / DSM 17024).